Reading from the N-terminus, the 594-residue chain is MDRISNLPNEIICHIVSFLSAKEAAFASILSKRWRNLFTIVIKLQFDDSVKNEGSLKDFVDGVLALPTSSRVRSCSLECRREFDPTHYDDFNRCICALLKRGILDLKLDICAGRRYSLPLEVFTCKTLVKLELGSDFGGFVVDLVPEDAFLPALETLLLNYIRFKDLRRCAFEKLLSACLVLKELVIHNMEWERWKWSGNISSPTLERLTISHVDLYECEFTRINLDTPNLTYLELSDAVPDDYPIVNLDSLVEVKLDLTLMVDHKYHGYVDDNDTISSNPTNLINGLRNVEIMNLQSPNTFQAFSYFHEAIPVFKNLYHLTITNNDTVIGFCWEFLPFVIKKCPNLKTLVIDGPLHYNEDRPKSVCHCLSGYSFLLSCPLEVLQITDYSGTPGEVEQLKHFLEKLSGLKLVKLHSLTRFGSDKKKLLMLPRASSKCKIKHYDSLENALLPSLKTLILDSVKFYDRCGCCAFQKLLSACPVLVESVMRNLEWEDWEWSGCASSQTLERLTIDHRYWAEHNLESFTFDTPSLTYLDYNAHVPGSYPTVNLDSLVEAKLNLGFTTDLVEDDDDPFTSDPTNLIKGLRNVEILRLWM.

One can recognise an F-box domain in the interval 1–49 (MDRISNLPNEIICHIVSFLSAKEAAFASILSKRWRNLFTIVIKLQFDDS). 15 LRR repeats span residues 103-125 (ILDL…VFTC), 128-151 (LVKL…DAFL), 152-174 (PALE…AFEK), 203-218 (SPTL…DLYE), 219-242 (CEFT…AVPD), 249-272 (LDSL…GYVD), 288-314 (LRNV…AIPV), 315-339 (FKNL…FLPF), 344-369 (CPNL…VCHC), 403-414 (LEKLSGLKLVKL), 415-437 (HSLT…SSKC), 450-474 (LPSL…AFQK), 503-518 (SQTL…YWAE), 519-541 (HNLE…AHVP), and 584-594 (LRNVEILRLWM).

This Arabidopsis thaliana (Mouse-ear cress) protein is F-box/LRR-repeat protein At3g58980.